The chain runs to 513 residues: MASVLSRRLGKRSLLGARVLGPSASEGPSAAPPSEPLLEGAAPQPFTTSDDTPCQEQPKEVLKAPSTSGLQQVAFQPGQKVYVWYGGQECTGLVEQHSWMEGQVTVWLLEQKLQVCCRVEEVWLAELQGPCPQAPPLEPGAQALAYRPVSRNIDVPKRKSDAVEMDEMMAAMVLTSLSCSPVVQSPPGTEANFSASRAACDPWKESGDISDSGSSTTSGHWSGSSGVSTPSPPHPQASPKYLGDAFGSPQTDHGFETDPDPFLLDEPAPRKRKNSVKVMYKCLWPNCGKVLRSIVGIKRHVKALHLGDTVDSDQFKREEDFYYTEVQLKEESAAAAAAAAAGTPVPGTPTSEPAPTPSMTGLPLSALPPPLHKAQSSGPEHPGPESSLPSGALSKSAPGSFWHIQADHAYQALPSFQIPVSPHIYTSVSWAAAPSAACSLSPVRSRSLSFSEPQQPAPAMKSHLIVTSPPRAQSGARKARGEAKKCRKVYGIEHRDQWCTACRWKKACQRFLD.

The segment covering 17–29 has biased composition (low complexity); it reads ARVLGPSASEGPS. The tract at residues 17-56 is disordered; it reads ARVLGPSASEGPSAAPPSEPLLEGAAPQPFTTSDDTPCQE. Polar residues predominate over residues 45–55; the sequence is PFTTSDDTPCQ. The Nuclear export signal signature appears at 165 to 174; it reads MDEMMAAMVL. A disordered region spans residues 204 to 269; that stretch reads KESGDISDSG…DPFLLDEPAP (66 aa). Positions 209–229 are enriched in low complexity; that stretch reads ISDSGSSTTSGHWSGSSGVST. The residue at position 248 (S248) is a Phosphoserine. The segment at 280–305 adopts a C2H2-type zinc-finger fold; that stretch reads YKCLWPNCGKVLRSIVGIKRHVKALH. Residues 335–394 form a disordered region; sequence AAAAAAAGTPVPGTPTSEPAPTPSMTGLPLSALPPPLHKAQSSGPEHPGPESSLPSGALS. Residues 348–359 are compositionally biased toward polar residues; sequence TPTSEPAPTPSM. Phosphoserine is present on residues S376 and S449. Positions 376-391 are enriched in low complexity; sequence SSGPEHPGPESSLPSG.

In terms of assembly, interacts with repression-mediating E2 binding site P2 of human papillomavirus type 8 (HPV8). As to expression, widely expressed.

The protein resides in the cytoplasm. It localises to the nucleus. In terms of biological role, plays a role in papillomavirus genes transcription. In Homo sapiens (Human), this protein is Zinc finger protein 395 (ZNF395).